Reading from the N-terminus, the 288-residue chain is MKILIAEYAGFCFGVKRAIETAYQEIEKGDGKKIYTLGEIIHNPQVISDLSKKGVNVIEEEELDKLTEGDKLIIRSHGVSKKLYDFLAKKGVEVIDVTCPFVKKVQNIVYEYYHKGYSIIIVGDRNHPEVIGVNGWCDDTAYVVNSIEEAYELPQLEKACAVAQTTLIEKHWKDILEVIKLKVKDLIFFNTICDATQKRQDAADELSKKVDVMFVIGGKHSSNTQKLKKICEKNCKNTFHIEDAEELTLEMVKDHEIIGVTAGASTPDYVIEDVIKKIRFLKGEDGDE.

Position 12 (Cys12) interacts with [4Fe-4S] cluster. (2E)-4-hydroxy-3-methylbut-2-enyl diphosphate is bound by residues His42 and His77. Residues His42 and His77 each contribute to the dimethylallyl diphosphate site. Positions 42 and 77 each coordinate isopentenyl diphosphate. A [4Fe-4S] cluster-binding site is contributed by Cys99. His127 provides a ligand contact to (2E)-4-hydroxy-3-methylbut-2-enyl diphosphate. Residue His127 coordinates dimethylallyl diphosphate. Isopentenyl diphosphate is bound at residue His127. Residue Glu129 is the Proton donor of the active site. Thr165 lines the (2E)-4-hydroxy-3-methylbut-2-enyl diphosphate pocket. Residue Cys193 participates in [4Fe-4S] cluster binding. (2E)-4-hydroxy-3-methylbut-2-enyl diphosphate-binding residues include Ser221, Ser222, Asn223, and Ser265. 4 residues coordinate dimethylallyl diphosphate: Ser221, Ser222, Asn223, and Ser265. Residues Ser221, Ser222, Asn223, and Ser265 each contribute to the isopentenyl diphosphate site.

It belongs to the IspH family. The cofactor is [4Fe-4S] cluster.

The enzyme catalyses isopentenyl diphosphate + 2 oxidized [2Fe-2S]-[ferredoxin] + H2O = (2E)-4-hydroxy-3-methylbut-2-enyl diphosphate + 2 reduced [2Fe-2S]-[ferredoxin] + 2 H(+). It catalyses the reaction dimethylallyl diphosphate + 2 oxidized [2Fe-2S]-[ferredoxin] + H2O = (2E)-4-hydroxy-3-methylbut-2-enyl diphosphate + 2 reduced [2Fe-2S]-[ferredoxin] + 2 H(+). Its pathway is isoprenoid biosynthesis; dimethylallyl diphosphate biosynthesis; dimethylallyl diphosphate from (2E)-4-hydroxy-3-methylbutenyl diphosphate: step 1/1. It participates in isoprenoid biosynthesis; isopentenyl diphosphate biosynthesis via DXP pathway; isopentenyl diphosphate from 1-deoxy-D-xylulose 5-phosphate: step 6/6. Functionally, catalyzes the conversion of 1-hydroxy-2-methyl-2-(E)-butenyl 4-diphosphate (HMBPP) into a mixture of isopentenyl diphosphate (IPP) and dimethylallyl diphosphate (DMAPP). Acts in the terminal step of the DOXP/MEP pathway for isoprenoid precursor biosynthesis. This Thermoanaerobacter pseudethanolicus (strain ATCC 33223 / 39E) (Clostridium thermohydrosulfuricum) protein is 4-hydroxy-3-methylbut-2-enyl diphosphate reductase.